A 395-amino-acid polypeptide reads, in one-letter code: 1-deoxy-D-xylulose 5-phosphate reductoisomerase (395 aa).

NADPH contacts are provided by threonine 10, glycine 11, serine 12, isoleucine 13, alanine 36, and asparagine 123. Lysine 124 contacts 1-deoxy-D-xylulose 5-phosphate. Glutamate 125 provides a ligand contact to NADPH. Aspartate 149 serves as a coordination point for Mn(2+). 1-deoxy-D-xylulose 5-phosphate-binding residues include serine 150, glutamate 151, serine 185, and histidine 208. Residue glutamate 151 participates in Mn(2+) binding. Glycine 214 provides a ligand contact to NADPH. 1-deoxy-D-xylulose 5-phosphate contacts are provided by serine 221, asparagine 226, lysine 227, and glutamate 230. Residue glutamate 230 participates in Mn(2+) binding.

Belongs to the DXR family. It depends on Mg(2+) as a cofactor. Mn(2+) is required as a cofactor.

It catalyses the reaction 2-C-methyl-D-erythritol 4-phosphate + NADP(+) = 1-deoxy-D-xylulose 5-phosphate + NADPH + H(+). The protein operates within isoprenoid biosynthesis; isopentenyl diphosphate biosynthesis via DXP pathway; isopentenyl diphosphate from 1-deoxy-D-xylulose 5-phosphate: step 1/6. Its function is as follows. Catalyzes the NADPH-dependent rearrangement and reduction of 1-deoxy-D-xylulose-5-phosphate (DXP) to 2-C-methyl-D-erythritol 4-phosphate (MEP). This is 1-deoxy-D-xylulose 5-phosphate reductoisomerase from Shewanella amazonensis (strain ATCC BAA-1098 / SB2B).